Consider the following 210-residue polypeptide: dTTP/UTP pyrophosphatase (210 aa).

Positions 1-15 (MTHGDNRDGPGRETR) are enriched in basic and acidic residues. The disordered stretch occupies residues 1–22 (MTHGDNRDGPGRETRSSGPLVL). The active-site Proton acceptor is D86.

Belongs to the Maf family. YhdE subfamily. A divalent metal cation is required as a cofactor.

Its subcellular location is the cytoplasm. The catalysed reaction is dTTP + H2O = dTMP + diphosphate + H(+). It catalyses the reaction UTP + H2O = UMP + diphosphate + H(+). Its function is as follows. Nucleoside triphosphate pyrophosphatase that hydrolyzes dTTP and UTP. May have a dual role in cell division arrest and in preventing the incorporation of modified nucleotides into cellular nucleic acids. This chain is dTTP/UTP pyrophosphatase, found in Rhodospirillum rubrum (strain ATCC 11170 / ATH 1.1.1 / DSM 467 / LMG 4362 / NCIMB 8255 / S1).